Consider the following 503-residue polypeptide: Puromycin resistance protein pur8 (503 aa).

Residues 1 to 24 (MARKPDISAVPVESAACQGPDPRR) lie on the Cytoplasmic side of the membrane. Residues 25–45 (WWGLVVILAAQLLVVLDGTVV) form a helical membrane-spanning segment. The Extracellular segment spans residues 46-64 (NIALPSVQRDLGMSDTSRQ). A helical membrane pass occupies residues 65–85 (WVITAYTLAFGGLLLLGGRVA). Residues 86 to 92 (DAFGRRR) lie on the Cytoplasmic side of the membrane. Residues 93-113 (IFAVGILGFGLASLLGGAAPD) form a helical membrane-spanning segment. The Extracellular segment spans residues 114–122 (PGTLFLARA). The helical transmembrane segment at 123 to 143 (LQGVFAAALAPAALALINTLF) threads the bilayer. Residues 144 to 152 (TEPGERGKA) lie on the Cytoplasmic side of the membrane. Residues 153–173 (FGVYGAVSGGGAAVGLLAGGL) traverse the membrane as a helical segment. Over 174–181 (LTEYLDWR) the chain is Extracellular. The helical transmembrane segment at 182-202 (WCLYVNAPVALLALLGCRLLP) threads the bilayer. The Cytoplasmic portion of the chain corresponds to 203 to 212 (RDRRTGRAVR). Residues 213 to 233 (LDLPGTLLGCGGLVAIVYAFA) traverse the membrane as a helical segment. The Extracellular segment spans residues 234 to 241 (EAESGWGD). Residues 242-262 (PLVVRLLVLGVLMLVAFALVE) form a helical membrane-spanning segment. Over 263 to 280 (RRVQDPLLPPGVVAHRVR) the chain is Cytoplasmic. Residues 281–301 (GGSFLVVGLPQIGLFGLFLFL) form a helical membrane-spanning segment. Residues 302–313 (TYYLQGILDYSP) are Extracellular-facing. The helical transmembrane segment at 314–334 (VLTGVAFLPLGLGIAVGSSLI) threads the bilayer. Topologically, residues 335 to 346 (AARLLPRTRPRT) are cytoplasmic. Residues 347–367 (LIVGALLAAAAGMALLTRLEP) form a helical membrane-spanning segment. Topologically, residues 368 to 371 (DTPQ) are extracellular. The helical transmembrane segment at 372 to 392 (VYLTHLLPAQILIGLGIGCMM) threads the bilayer. The Cytoplasmic segment spans residues 393-422 (MPAMHTATARVAPHEAGAAAAVVNSAQQVG). Residues 423 to 443 (GALGVALLNTVSTGATAAYLA) form a helical membrane-spanning segment. Topologically, residues 444–461 (DHGTSPAATVDGTVHGYT) are extracellular. The helical transmembrane segment at 462 to 482 (VAIAFAVGVLLLTAVLAWVLI) threads the bilayer. The Cytoplasmic portion of the chain corresponds to 483 to 503 (DSRTEAADETGSASVTPARPR).

The protein belongs to the major facilitator superfamily. EmrB family.

Its subcellular location is the cell membrane. May be involved in active puromycin efflux energized by a proton-dependent electrochemical gradient. In addition, it could be implicated in secreting N-acetylpuromycin, the last intermediate of the puromycin biosynthesis pathway, to the environment. The protein is Puromycin resistance protein pur8 (pur8) of Streptomyces alboniger.